The chain runs to 464 residues: Cell division protein FtsA (464 aa).

The tract at residues 392-464 (EVIETDKDTE…FKKLMKSLFE (73 aa)) is disordered. Positions 416–455 (KKENDEVAPEAPREESYEDRENHLEDEQQTEGKAKEESKF) are enriched in basic and acidic residues.

The protein belongs to the FtsA/MreB family. Self-interacts. Interacts with FtsZ.

Its subcellular location is the cell membrane. In terms of biological role, cell division protein that is involved in the assembly of the Z ring. May serve as a membrane anchor for the Z ring. The chain is Cell division protein FtsA from Staphylococcus epidermidis (strain ATCC 12228 / FDA PCI 1200).